We begin with the raw amino-acid sequence, 159 residues long: 3-dehydroquinate dehydratase (159 aa).

Y22 acts as the Proton acceptor in catalysis. The substrate site is built by N73, H79, and D86. The active-site Proton donor is H99. Substrate-binding positions include I100 to S101 and R110.

It belongs to the type-II 3-dehydroquinase family. In terms of assembly, homododecamer.

It catalyses the reaction 3-dehydroquinate = 3-dehydroshikimate + H2O. The protein operates within metabolic intermediate biosynthesis; chorismate biosynthesis; chorismate from D-erythrose 4-phosphate and phosphoenolpyruvate: step 3/7. Functionally, catalyzes a trans-dehydration via an enolate intermediate. This chain is 3-dehydroquinate dehydratase, found in Campylobacter jejuni subsp. doylei (strain ATCC BAA-1458 / RM4099 / 269.97).